The following is a 375-amino-acid chain: Carbamoyl phosphate synthase small chain (375 aa).

A CPSase region spans residues 1-184 (MVSLYLENGL…LDYKPFDEKT (184 aa)). L-glutamine-binding residues include serine 44, glycine 240, and glycine 242. The 188-residue stretch at 188-375 (IIAVLDFGAK…KEFVELLKDF (188 aa)) folds into the Glutamine amidotransferase type-1 domain. Cysteine 268 functions as the Nucleophile in the catalytic mechanism. The L-glutamine site is built by leucine 269, glutamine 272, asparagine 310, and tyrosine 313. Residues histidine 351 and glutamate 353 contribute to the active site.

The protein belongs to the CarA family. In terms of assembly, composed of two chains; the small (or glutamine) chain promotes the hydrolysis of glutamine to ammonia, which is used by the large (or ammonia) chain to synthesize carbamoyl phosphate. Tetramer of heterodimers (alpha,beta)4.

It catalyses the reaction hydrogencarbonate + L-glutamine + 2 ATP + H2O = carbamoyl phosphate + L-glutamate + 2 ADP + phosphate + 2 H(+). The catalysed reaction is L-glutamine + H2O = L-glutamate + NH4(+). Its pathway is amino-acid biosynthesis; L-arginine biosynthesis; carbamoyl phosphate from bicarbonate: step 1/1. It participates in pyrimidine metabolism; UMP biosynthesis via de novo pathway; (S)-dihydroorotate from bicarbonate: step 1/3. In terms of biological role, small subunit of the glutamine-dependent carbamoyl phosphate synthetase (CPSase). CPSase catalyzes the formation of carbamoyl phosphate from the ammonia moiety of glutamine, carbonate, and phosphate donated by ATP, constituting the first step of 2 biosynthetic pathways, one leading to arginine and/or urea and the other to pyrimidine nucleotides. The small subunit (glutamine amidotransferase) binds and cleaves glutamine to supply the large subunit with the substrate ammonia. In Helicobacter pylori (strain ATCC 700392 / 26695) (Campylobacter pylori), this protein is Carbamoyl phosphate synthase small chain.